A 512-amino-acid chain; its full sequence is Probable DNA ligase (512 aa).

Position 217 (Asp217) interacts with ATP. The active-site N6-AMP-lysine intermediate is Lys219. ATP is bound by residues Arg224, Arg239, Glu268, Phe306, Arg377, and Lys383.

The protein belongs to the ATP-dependent DNA ligase family. The cofactor is Mg(2+).

The enzyme catalyses ATP + (deoxyribonucleotide)n-3'-hydroxyl + 5'-phospho-(deoxyribonucleotide)m = (deoxyribonucleotide)n+m + AMP + diphosphate.. In terms of biological role, DNA ligase that seals nicks in double-stranded DNA during DNA replication, DNA recombination and DNA repair. This is Probable DNA ligase from Beutenbergia cavernae (strain ATCC BAA-8 / DSM 12333 / CCUG 43141 / JCM 11478 / NBRC 16432 / NCIMB 13614 / HKI 0122).